We begin with the raw amino-acid sequence, 180 residues long: MKGRAEYVYARVLVDLVKDNSEEVSAGIRSLLCACEDRDVRAFFVDPTVPFGVKVAALRDVQKACALDDTLVSFVCVVVEDGLFASLGGIFEKFFALLRRKLGKFNLEIISAAPLTEKEESKILRMLRAQYGDPEAIIRRTDPGILGGFVAKGDTFTVDASYVGQLRELTRISKEAVFSI.

This sequence belongs to the ATPase delta chain family. F-type ATPases have 2 components, F(1) - the catalytic core - and F(0) - the membrane proton channel. F(1) has five subunits: alpha(3), beta(3), gamma(1), delta(1), epsilon(1). F(0) has three main subunits: a(1), b(2) and c(10-14). The alpha and beta chains form an alternating ring which encloses part of the gamma chain. F(1) is attached to F(0) by a central stalk formed by the gamma and epsilon chains, while a peripheral stalk is formed by the delta and b chains.

It localises to the cell inner membrane. In terms of biological role, f(1)F(0) ATP synthase produces ATP from ADP in the presence of a proton or sodium gradient. F-type ATPases consist of two structural domains, F(1) containing the extramembraneous catalytic core and F(0) containing the membrane proton channel, linked together by a central stalk and a peripheral stalk. During catalysis, ATP synthesis in the catalytic domain of F(1) is coupled via a rotary mechanism of the central stalk subunits to proton translocation. Its function is as follows. This protein is part of the stalk that links CF(0) to CF(1). It either transmits conformational changes from CF(0) to CF(1) or is implicated in proton conduction. The polypeptide is ATP synthase subunit delta (Anaplasma phagocytophilum (strain HZ)).